We begin with the raw amino-acid sequence, 711 residues long: C-Jun-amino-terminal kinase-interacting protein 1 (711 aa).

A disordered region spans residues 1 to 27 (MAERESGGLGGGAASPPAASPFLGLHI). Residues 14–25 (ASPPAASPFLGL) show a composition bias toward low complexity. S15, S29, and S40 each carry phosphoserine. The disordered stretch occupies residues 78–371 (AGGGGAGSRL…PPRASLSSDT (294 aa)). T103 carries the phosphothreonine; by MAPK8, MAPK9 and MAPK10 modification. Residues 105–116 (GAEDDEEDDDEE) show a composition bias toward acidic residues. The interval 127 to 285 (PKAESGQEPA…EATEEIYLTP (159 aa)) is JNK-binding domain (JBD). A compositionally biased stretch (low complexity) spans 139–149 (GQGQSQGQSQG). The residue at position 152 (S152) is a Phosphoserine. The tract at residues 157 to 176 (RPKRPTTLNLFPQVPRSQDT) is minimal inhibitory domain (MID). Over residues 162 to 182 (TTLNLFPQVPRSQDTLNNNSL) the composition is skewed to polar residues. S181, S187, S193, S195, and S196 each carry phosphoserine. Polar residues predominate over residues 194–204 (RSSSPLKTGEQ). T205 bears the Phosphothreonine; by MAPK8, MAPK9 and MAPK10 mark. S214 is subject to Phosphoserine. The segment covering 228–244 (DRGTSTDSPCRRSTATQ) has biased composition (polar residues). The segment covering 267–277 (IHYQADVRLEA) has biased composition (basic and acidic residues). The segment at 283-471 (LTPVQRPPDA…NVFMSGRSRS (189 aa)) is interaction with MAP3K7. Residues S311, S328, S330, S340, S355, S366, S369, S407, and S409 each carry the phosphoserine modification. 2 short sequence motifs (D-box) span residues 353 to 360 (RGSLGEPP) and 364 to 372 (RASLSSDTS). T411 bears the Phosphothreonine mark. A disordered region spans residues 429-451 (EEYEEAPRPQPPACLSEDSTPDE). S444 and S447 each carry phosphoserine. Residue T448 is modified to Phosphothreonine. A phosphoserine mark is found at S469, S471, S472, and S473. The interval 471–660 (SSSAESFGLF…PKNNKYFGFI (190 aa)) is interaction with VRK2. In terms of domain architecture, SH3 spans 488-549 (EQEQTHRAIF…PAYYAIEVTK (62 aa)). The 140-residue stretch at 561–700 (SDWVDQFRVK…FQQFYKQFVE (140 aa)) folds into the PID domain.

This sequence belongs to the JIP scaffold family. As to quaternary structure, forms homo- or heterooligomeric complexes. Binds specific components of the JNK signaling pathway namely, MAPK8/JNK1, MAPK9/JNK2, MAPK10/JNK3, MAP2K7/MKK7, MAP3K11/MLK3 and DLK1. Also binds the proline-rich domain-containing splice variant of apolipoprotein E receptor 2 (ApoER2). Interacts, via the PID domain, with ARHGEF28. Binds the cytoplasmic tails of LRP1 and LRP2 (Megalin). Binds the TPR motif-containing C-terminal of KNS2, then the pre-assembled MAPK8IP1 scaffolding complexes are transported as a cargo of kinesin, to the required subcellular location. Interacts with the cytoplasmic domain of APP. Interacts with DCLK2. Interacts with MAP3K7/TAK1. Interacts with isoform 1 and isoform 2 of VRK2. Found in a complex with SH3RF1, RAC1, MAP3K11/MLK3, MAP2K7/MKK7 and MAPK8/JNK1. Found in a complex with SH3RF1, RAC2, MAP3K7/TAK1, MAP2K7/MKK7, MAPK8/JNK1 and MAPK9/JNK2. Interacts with SH3RF2. Phosphorylated by MAPK8, MAPK9 and MAPK10. Phosphorylation on Thr-103 is also necessary for the dissociation and activation of MAP3K12. Phosphorylated by isoform 1 and isoform 2 of VRK2. Hyperphosphorylated during mitosis following activation of stress-activated and MAP kinases. Post-translationally, ubiquitinated. Two preliminary events are required to prime for ubiquitination; phosphorylation and an increased in intracellular calcium concentration. Then, the calcium influx initiates ubiquitination and degradation by the ubiquitin-proteasome pathway. In terms of tissue distribution, highly expressed in brain. Expressed in neurons, localizing to neurite tips in differentiating cells. Also expressed in the pancreas, testis and prostate. Low levels in heart, ovary and small intestine. Decreased levels in pancreatic beta cells sensitize cells to IL-1-beta-induced apoptosis.

It localises to the cytoplasm. It is found in the perinuclear region. The protein resides in the nucleus. The protein localises to the endoplasmic reticulum membrane. Its subcellular location is the mitochondrion membrane. The JNK-interacting protein (JIP) group of scaffold proteins selectively mediates JNK signaling by aggregating specific components of the MAPK cascade to form a functional JNK signaling module. Required for JNK activation in response to excitotoxic stress. Cytoplasmic MAPK8IP1 causes inhibition of JNK-regulated activity by retaining JNK in the cytoplasm and inhibiting JNK phosphorylation of c-Jun. May also participate in ApoER2-specific reelin signaling. Directly, or indirectly, regulates GLUT2 gene expression and beta-cell function. Appears to have a role in cell signaling in mature and developing nerve terminals. May function as a regulator of vesicle transport, through interactions with the JNK-signaling components and motor proteins. Functions as an anti-apoptotic protein and whose level seems to influence the beta-cell death or survival response. Acts as a scaffold protein that coordinates with SH3RF1 in organizing different components of the JNK pathway, including RAC1 or RAC2, MAP3K11/MLK3 or MAP3K7/TAK1, MAP2K7/MKK7, MAPK8/JNK1 and/or MAPK9/JNK2 into a functional multiprotein complex to ensure the effective activation of the JNK signaling pathway. Regulates the activation of MAPK8/JNK1 and differentiation of CD8(+) T-cells. This Homo sapiens (Human) protein is C-Jun-amino-terminal kinase-interacting protein 1 (MAPK8IP1).